The following is a 310-amino-acid chain: ADP-L-glycero-D-manno-heptose-6-epimerase (310 aa).

NADP(+) contacts are provided by residues 10 to 11 (LI), 31 to 32 (DN), Lys38, Lys53, 75 to 79 (EGACS), and Asn92. Catalysis depends on Tyr140, which acts as the Proton acceptor. Residue Lys144 coordinates NADP(+). Asn169 contacts substrate. Residues Val170 and Lys178 each contribute to the NADP(+) site. Lys178 (proton acceptor) is an active-site residue. Substrate is bound by residues Ser180, His187, 201 to 204 (FAGS), Arg209, and Tyr272.

The protein belongs to the NAD(P)-dependent epimerase/dehydratase family. HldD subfamily. In terms of assembly, homopentamer. NADP(+) serves as cofactor.

The catalysed reaction is ADP-D-glycero-beta-D-manno-heptose = ADP-L-glycero-beta-D-manno-heptose. It functions in the pathway nucleotide-sugar biosynthesis; ADP-L-glycero-beta-D-manno-heptose biosynthesis; ADP-L-glycero-beta-D-manno-heptose from D-glycero-beta-D-manno-heptose 7-phosphate: step 4/4. Functionally, catalyzes the interconversion between ADP-D-glycero-beta-D-manno-heptose and ADP-L-glycero-beta-D-manno-heptose via an epimerization at carbon 6 of the heptose. The protein is ADP-L-glycero-D-manno-heptose-6-epimerase of Erwinia tasmaniensis (strain DSM 17950 / CFBP 7177 / CIP 109463 / NCPPB 4357 / Et1/99).